A 145-amino-acid chain; its full sequence is uncharacterized protein (145 aa).

Residues 1-23 (MSSSNLSSRKTRISAHFLDAAPA) form the signal peptide. A helical membrane pass occupies residues 123 to 140 (VLLLIIALVFLLFVAIFI).

Its subcellular location is the membrane. This is an uncharacterized protein from Archaeoglobus fulgidus (strain ATCC 49558 / DSM 4304 / JCM 9628 / NBRC 100126 / VC-16).